The primary structure comprises 553 residues: Putative transport protein YidE (553 aa).

The next 5 membrane-spanning stretches (helical) occupy residues 4–24, 28–48, 65–85, 95–115, and 158–178; these read IALT…IGNV, GIGL…HFVS, FGLI…FFAS, LFAV…HKLF, and MSYA…MWML. 2 consecutive RCK C-terminal domains span residues 191 to 276 and 279 to 361; these read QQHE…VIGQ and DTSL…VLGN. Helical transmembrane passes span 371-391, 393-413, 439-459, 464-484, 493-513, and 533-553; these read MLPV…PVFV, GFPA…ALIL, IVLF…NTLV, LSWI…VGIL, YLTM…LAFA, and LVMF…WSIG.

This sequence belongs to the AAE transporter (TC 2.A.81) family. YidE subfamily.

The protein localises to the cell membrane. This Escherichia coli O7:K1 (strain IAI39 / ExPEC) protein is Putative transport protein YidE.